A 306-amino-acid polypeptide reads, in one-letter code: tRNA-cytidine(32) 2-sulfurtransferase (306 aa).

The disordered stretch occupies residues 1–25 (MSAVISLPDPQPRAARDPRVAEREQ). Basic and acidic residues predominate over residues 14–25 (AARDPRVAEREQ). The PP-loop motif signature appears at 57-62 (SGGKDS). 3 residues coordinate [4Fe-4S] cluster: C132, C135, and C223. Residues 286–306 (AHAWLAGSPADADADPETPTV) are disordered. The segment covering 297–306 (ADADPETPTV) has biased composition (acidic residues).

The protein belongs to the TtcA family. In terms of assembly, homodimer. Requires Mg(2+) as cofactor. The cofactor is [4Fe-4S] cluster.

Its subcellular location is the cytoplasm. The enzyme catalyses cytidine(32) in tRNA + S-sulfanyl-L-cysteinyl-[cysteine desulfurase] + AH2 + ATP = 2-thiocytidine(32) in tRNA + L-cysteinyl-[cysteine desulfurase] + A + AMP + diphosphate + H(+). It functions in the pathway tRNA modification. Catalyzes the ATP-dependent 2-thiolation of cytidine in position 32 of tRNA, to form 2-thiocytidine (s(2)C32). The sulfur atoms are provided by the cysteine/cysteine desulfurase (IscS) system. This is tRNA-cytidine(32) 2-sulfurtransferase from Stenotrophomonas maltophilia (strain K279a).